The primary structure comprises 358 residues: Heme A synthase (358 aa).

The next 8 membrane-spanning stretches (helical) occupy residues 22–42, 107–127, 139–159, 173–193, 208–228, 269–289, 302–322, and 324–344; these read IQVWLYSILLLCLAIVLVGGA, ILGRLVGLLALLGLIWFWATK, IVPILIAFQGAIGWWMVASGI, AFHLITACFIITFVTYLSRGF, FAGWLVVLILIEIYFGALVAG, FIHRFFAYFLFFVTIIHAFYV, AFFICVMIVVQAFLGIITLLR, and VPIGLGLIHQSVALAILCFSV. His-271 lines the heme pocket. Position 332 (His-332) interacts with heme.

The protein belongs to the COX15/CtaA family. Type 2 subfamily. In terms of assembly, interacts with CtaB. It depends on heme b as a cofactor.

Its subcellular location is the cell membrane. The enzyme catalyses Fe(II)-heme o + 2 A + H2O = Fe(II)-heme a + 2 AH2. The protein operates within porphyrin-containing compound metabolism; heme A biosynthesis; heme A from heme O: step 1/1. Functionally, catalyzes the conversion of heme O to heme A by two successive hydroxylations of the methyl group at C8. The first hydroxylation forms heme I, the second hydroxylation results in an unstable dihydroxymethyl group, which spontaneously dehydrates, resulting in the formyl group of heme A. The sequence is that of Heme A synthase from Bartonella quintana (strain Toulouse) (Rochalimaea quintana).